Here is a 1164-residue protein sequence, read N- to C-terminus: DNA-directed RNA polymerase 132 kDa polypeptide (1164 aa).

This sequence belongs to the RNA polymerase beta chain family. As to quaternary structure, the DNA-dependent RNA polymerase used for intermediate and late genes expression consists of eight subunits (147) kDa, (133) kDa, (35) kDa, (30) kDa, (22) kDa, (19) kDa, (18) kDa and (7) kDa totalling more than 500 kDa in mass. The same holoenzyme, with the addition of the transcription-specificity factor RAP94, is used for early gene expression.

The protein localises to the virion. The catalysed reaction is RNA(n) + a ribonucleoside 5'-triphosphate = RNA(n+1) + diphosphate. Functionally, part of the DNA-dependent RNA polymerase which catalyzes the transcription of viral DNA into RNA using the four ribonucleoside triphosphates as substrates. Responsible for the transcription of early, intermediate and late genes. DNA-dependent RNA polymerase associates with the early transcription factor (ETF), itself composed of D6 and A7, thereby allowing the early genes transcription. Late transcription, and probably also intermediate transcription, require newly synthesized RNA polymerase. The sequence is that of DNA-directed RNA polymerase 132 kDa polypeptide (RPO132) from Oryctolagus cuniculus (Rabbit).